The chain runs to 128 residues: Sulfurtransferase TusD (128 aa).

C78 functions as the Cysteine persulfide intermediate in the catalytic mechanism.

It belongs to the DsrE/TusD family. Heterohexamer, formed by a dimer of trimers. The hexameric TusBCD complex contains 2 copies each of TusB, TusC and TusD. The TusBCD complex interacts with TusE.

The protein resides in the cytoplasm. Its function is as follows. Part of a sulfur-relay system required for 2-thiolation of 5-methylaminomethyl-2-thiouridine (mnm(5)s(2)U) at tRNA wobble positions. Accepts sulfur from TusA and transfers it in turn to TusE. This chain is Sulfurtransferase TusD, found in Erwinia tasmaniensis (strain DSM 17950 / CFBP 7177 / CIP 109463 / NCPPB 4357 / Et1/99).